A 199-amino-acid chain; its full sequence is Holliday junction branch migration complex subunit RuvA (199 aa).

A domain I region spans residues 1–63; sequence MYEYLTGLVT…EDNISLFGFT (63 aa). Residues 64–142 are domain II; sequence DQNEKNLFMQ…NESSSSLFAT (79 aa). The flexible linker stretch occupies residues 143–149; that stretch reads TQLTVDA. The tract at residues 150–199 is domain III; it reads TVNRELKDALEALAALGYKERDIKKVQKALMKEEQMATDEYLRQALRLLN.

This sequence belongs to the RuvA family. As to quaternary structure, homotetramer. Forms an RuvA(8)-RuvB(12)-Holliday junction (HJ) complex. HJ DNA is sandwiched between 2 RuvA tetramers; dsDNA enters through RuvA and exits via RuvB. An RuvB hexamer assembles on each DNA strand where it exits the tetramer. Each RuvB hexamer is contacted by two RuvA subunits (via domain III) on 2 adjacent RuvB subunits; this complex drives branch migration. In the full resolvosome a probable DNA-RuvA(4)-RuvB(12)-RuvC(2) complex forms which resolves the HJ.

The protein localises to the cytoplasm. Its function is as follows. The RuvA-RuvB-RuvC complex processes Holliday junction (HJ) DNA during genetic recombination and DNA repair, while the RuvA-RuvB complex plays an important role in the rescue of blocked DNA replication forks via replication fork reversal (RFR). RuvA specifically binds to HJ cruciform DNA, conferring on it an open structure. The RuvB hexamer acts as an ATP-dependent pump, pulling dsDNA into and through the RuvAB complex. HJ branch migration allows RuvC to scan DNA until it finds its consensus sequence, where it cleaves and resolves the cruciform DNA. This Limosilactobacillus reuteri subsp. reuteri (strain JCM 1112) (Lactobacillus reuteri) protein is Holliday junction branch migration complex subunit RuvA.